The primary structure comprises 257 residues: Ribonuclease HII (257 aa).

The RNase H type-2 domain occupies 72–257 (TYIAGIDEVG…FAPIKDMIQK (186 aa)). Residues D78, E79, and D170 each contribute to the a divalent metal cation site.

The protein belongs to the RNase HII family. Mn(2+) serves as cofactor. It depends on Mg(2+) as a cofactor.

It is found in the cytoplasm. It catalyses the reaction Endonucleolytic cleavage to 5'-phosphomonoester.. In terms of biological role, endonuclease that specifically degrades the RNA of RNA-DNA hybrids. This Bacillus cereus (strain ZK / E33L) protein is Ribonuclease HII.